The following is a 365-amino-acid chain: Phosphatidylcholine:ceramide cholinephosphotransferase 4 (365 aa).

Residues methionine 1–glutamine 44 lie on the Cytoplasmic side of the membrane. The helical transmembrane segment at valine 45–isoleucine 65 threads the bilayer. The Lumenal segment spans residues threonine 66–glycine 92. The chain crosses the membrane as a helical span at residues methionine 93–phenylalanine 113. At lysine 114 to arginine 165 the chain is on the cytoplasmic side. A helical transmembrane segment spans residues phenylalanine 166–leucine 186. Residues proline 187–threonine 229 are Lumenal-facing. Histidine 228 is a catalytic residue. A helical membrane pass occupies residues valine 230–phenylalanine 250. Position 251 (arginine 251) is a topological domain, cytoplasmic. The chain crosses the membrane as a helical span at residues proline 252–tyrosine 272. Active-site residues include histidine 271 and aspartate 275. At threonine 273–aspartate 275 the chain is on the lumenal side. The helical transmembrane segment at valine 276–glycine 296 threads the bilayer. The Cytoplasmic segment spans residues alanine 297–valine 365.

The protein belongs to the sphingomyelin synthase family.

Its subcellular location is the golgi apparatus membrane. It carries out the reaction an N-acylsphing-4-enine + a 1,2-diacyl-sn-glycero-3-phosphocholine = a sphingomyelin + a 1,2-diacyl-sn-glycerol. Its function is as follows. Bidirectional lipid cholinephosphotransferase capable of converting phosphatidylcholine (PC) and ceramide to sphingomyelin (SM) and diacylglycerol (DAG) and vice versa. Direction is dependent on the relative concentrations of DAG and ceramide as phosphocholine acceptors. Directly and specifically recognizes the choline head group on the substrate. Also requires two fatty chains on the choline-P donor molecule in order to be recognized efficiently as a substrate. Does not function strictly as a SM synthase. Essential for viability of the pathogenic bloodstream stage of this human protozoan parasite and, consequently, can be considered as potential drug target. This is Phosphatidylcholine:ceramide cholinephosphotransferase 4 from Trypanosoma brucei brucei (strain 927/4 GUTat10.1).